Reading from the N-terminus, the 375-residue chain is 23S rRNA (uracil(747)-C(5))-methyltransferase RlmC (375 aa).

[4Fe-4S] cluster contacts are provided by Cys-3, Cys-11, Cys-14, and Cys-87. The S-adenosyl-L-methionine site is built by Gln-212, Phe-241, Glu-262, and Asn-307. The active-site Nucleophile is the Cys-334.

It belongs to the class I-like SAM-binding methyltransferase superfamily. RNA M5U methyltransferase family. RlmC subfamily.

The enzyme catalyses uridine(747) in 23S rRNA + S-adenosyl-L-methionine = 5-methyluridine(747) in 23S rRNA + S-adenosyl-L-homocysteine + H(+). In terms of biological role, catalyzes the formation of 5-methyl-uridine at position 747 (m5U747) in 23S rRNA. In Salmonella enteritidis PT4 (strain P125109), this protein is 23S rRNA (uracil(747)-C(5))-methyltransferase RlmC.